We begin with the raw amino-acid sequence, 470 residues long: Heparan-sulfate 6-O-sulfotransferase 3 (470 aa).

Residues 1 to 4 lie on the Cytoplasmic side of the membrane; the sequence is MDER. Residues 5-27 traverse the membrane as a helical; Signal-anchor for type II membrane protein segment; sequence FNKWLLTPVLTLLFVVIMYQYVS. At 28 to 470 the chain is on the lumenal side; sequence PSCTSSCTNF…EDYNSQVVRW (443 aa). The interval 36–121 is disordered; the sequence is NFGEQLRSGE…EAPENGSLPR (86 aa). A compositionally biased stretch (acidic residues) spans 88-113; it reads PEDEDEDPGDPEEEEEEEEEEPDPEA. N-linked (GlcNAc...) asparagine glycosylation is found at Asn-116 and Asn-127. 151–159 contacts 3'-phosphoadenylyl sulfate; the sequence is HIQKTGGTT. Residues 181–182, Arg-198, Trp-203, and His-208 each bind substrate; that span reads KK. Catalysis depends on His-208, which acts as the Proton acceptor. Residue Asn-230 is glycosylated (N-linked (GlcNAc...) asparagine). Positions 244 and 252 each coordinate 3'-phosphoadenylyl sulfate. 2 residues coordinate substrate: His-256 and Trp-263. Asn-323 and Asn-328 each carry an N-linked (GlcNAc...) asparagine glycan. 376–378 contributes to the 3'-phosphoadenylyl sulfate binding site; the sequence is TQF. The N-linked (GlcNAc...) asparagine glycan is linked to Asn-379. 382–383 provides a ligand contact to 3'-phosphoadenylyl sulfate; the sequence is RA. Positions 421 to 453 are disordered; sequence TKQLEHQRDRQKRREERRLQREHRAHRWPKEDR. Residues 422–439 are compositionally biased toward basic and acidic residues; sequence KQLEHQRDRQKRREERRL.

It belongs to the sulfotransferase 6 family. As to expression, ubiquitously expressed.

Its subcellular location is the membrane. The enzyme catalyses alpha-D-glucosaminyl-[heparan sulfate](n) + 3'-phosphoadenylyl sulfate = 6-sulfo-alpha-D-glucosaminyl-[heparan sulfate](n) + adenosine 3',5'-bisphosphate + H(+). Functionally, 6-O-sulfation enzyme which catalyzes the transfer of sulfate from 3'-phosphoadenosine 5'-phosphosulfate (PAPS) to position 6 of the N-sulfoglucosamine residue (GlcNS) of heparan sulfate. The protein is Heparan-sulfate 6-O-sulfotransferase 3 (Hs6st3) of Mus musculus (Mouse).